The sequence spans 216 residues: Small ribosomal subunit protein uS3c (216 aa).

The region spanning 39 to 109 (IRSYINRELE…SIRINVIELT (71 aa)) is the KH type-2 domain.

It belongs to the universal ribosomal protein uS3 family. Part of the 30S ribosomal subunit.

The protein localises to the plastid. The protein resides in the chloroplast. This chain is Small ribosomal subunit protein uS3c (rps3), found in Guillardia theta (Cryptophyte).